Consider the following 54-residue polypeptide: MAAKGARMIIHLECTECKNRNYTTEKNKKNDPDRLELRKYCKFCRKHTLHRETK.

It belongs to the bacterial ribosomal protein bL33 family.

The sequence is that of Large ribosomal subunit protein bL33 from Caldicellulosiruptor saccharolyticus (strain ATCC 43494 / DSM 8903 / Tp8T 6331).